The following is a 136-amino-acid chain: NADPH-dependent 7-cyano-7-deazaguanine reductase (136 aa).

The Thioimide intermediate role is filled by Cys-50. Residue Asp-57 is the Proton donor of the active site. Substrate-binding positions include 72–74 (YEL) and 91–92 (HE).

This sequence belongs to the GTP cyclohydrolase I family. QueF type 1 subfamily.

It localises to the cytoplasm. It carries out the reaction 7-aminomethyl-7-carbaguanine + 2 NADP(+) = 7-cyano-7-deazaguanine + 2 NADPH + 3 H(+). It functions in the pathway tRNA modification; tRNA-queuosine biosynthesis. In terms of biological role, catalyzes the NADPH-dependent reduction of 7-cyano-7-deazaguanine (preQ0) to 7-aminomethyl-7-deazaguanine (preQ1). In Prochlorococcus marinus (strain AS9601), this protein is NADPH-dependent 7-cyano-7-deazaguanine reductase.